A 501-amino-acid polypeptide reads, in one-letter code: Cytochrome P450 3A6 (501 aa).

C440 provides a ligand contact to heme.

It belongs to the cytochrome P450 family. Heme is required as a cofactor.

The protein localises to the endoplasmic reticulum membrane. Its subcellular location is the microsome membrane. The enzyme catalyses an organic molecule + reduced [NADPH--hemoprotein reductase] + O2 = an alcohol + oxidized [NADPH--hemoprotein reductase] + H2O + H(+). Its function is as follows. Exhibits progesterone 6 beta-hydroxylase activity. This chain is Cytochrome P450 3A6 (CYP3A6), found in Oryctolagus cuniculus (Rabbit).